We begin with the raw amino-acid sequence, 393 residues long: MAVIKMTDLDLKGKRVLLREDLNVPLKEGRITSDKRIRAALPSIRMAMEAGARVLIVSHLGRPVEGEFDEAFSLAPVAAHLSRELGRDVRLVKDYIDGVDVAEGDCVLCENVRFLKGEKKNTEELGRRLAALCDIFVMDAFGAAHRAQASTHAVARFAPVACAGPLLAAELDALERALDAPKHPLVGIIGGSKVSTKLTLLDNLSHRVDRLIVGGGIANNFIKAAGYEVGKSLYEPELVEEAARLMAAARAAGGEIPVPLDVVVGPELADGAPATVRKVSEVGPDEMILDIGPATATRYREILLAAGTIVWNGPVGAFEWEQFGAGTRALCEAVADSPAFSIAGGGDTVAAVEKYGVASRVGYISTGGGAFLEFLEGKELPAVAILQERAAQS.

Substrate is bound by residues 21–23 (DLN), Arg36, 59–62 (HLGR), Arg113, and Arg146. ATP-binding positions include Lys197, Glu319, and 345 to 348 (GGDT).

The protein belongs to the phosphoglycerate kinase family. Monomer.

Its subcellular location is the cytoplasm. It carries out the reaction (2R)-3-phosphoglycerate + ATP = (2R)-3-phospho-glyceroyl phosphate + ADP. Its pathway is carbohydrate degradation; glycolysis; pyruvate from D-glyceraldehyde 3-phosphate: step 2/5. In Nitratidesulfovibrio vulgaris (strain ATCC 29579 / DSM 644 / CCUG 34227 / NCIMB 8303 / VKM B-1760 / Hildenborough) (Desulfovibrio vulgaris), this protein is Phosphoglycerate kinase.